The following is a 95-amino-acid chain: DNA-directed RNA polymerase subunit Rpo11 (95 aa).

This sequence belongs to the archaeal Rpo11/eukaryotic RPB11/RPC19 RNA polymerase subunit family. As to quaternary structure, part of the RNA polymerase complex.

Its subcellular location is the cytoplasm. It carries out the reaction RNA(n) + a ribonucleoside 5'-triphosphate = RNA(n+1) + diphosphate. Its function is as follows. DNA-dependent RNA polymerase (RNAP) catalyzes the transcription of DNA into RNA using the four ribonucleoside triphosphates as substrates. This is DNA-directed RNA polymerase subunit Rpo11 from Methanococcus vannielii (strain ATCC 35089 / DSM 1224 / JCM 13029 / OCM 148 / SB).